We begin with the raw amino-acid sequence, 266 residues long: uncharacterized protein (266 aa).

Helical transmembrane passes span 9–29 (IAAL…LFIF), 37–57 (TMPH…LVFY), 69–89 (LIKV…ISLL), 123–143 (FLLM…MIFT), 153–173 (YNPF…LVIA), 184–204 (LPLA…LFLL), 216–236 (SVFA…ILIL), and 246–266 (TNSL…MVFV).

The protein resides in the cell membrane. This is an uncharacterized protein from Haemophilus influenzae (strain ATCC 51907 / DSM 11121 / KW20 / Rd).